We begin with the raw amino-acid sequence, 719 residues long: Fusicoccadiene synthase (719 aa).

Positions 1 to 334 (MEFKYSEVVE…RYNPDVSFNK (334 aa)) are fusicocca-2,10(14)-diene synthase. The Mg(2+) site is built by Asp92 and Asp96. A geranylgeranyl diphosphate synthase region spans residues 335 to 719 (TQLEWMRQGL…MRLLLELLRV (385 aa)). The disordered stretch occupies residues 358–404 (EIDSDESAVSPTADESDSTEDSLGSGSRQDSSLSTGLSLSPVHSNEG). The span at 378–400 (DSLGSGSRQDSSLSTGLSLSPVH) shows a compositional bias: polar residues. Isopentenyl diphosphate-binding residues include Lys435, Arg438, and His467. Mg(2+) is bound by residues Asp474 and Asp478. Arg483 provides a ligand contact to dimethylallyl diphosphate. Arg484 is a binding site for isopentenyl diphosphate. Dimethylallyl diphosphate is bound by residues Lys561, Thr562, Gln602, Asn609, Lys619, and Lys629.

In the N-terminal section; belongs to the terpene synthase family. The protein in the C-terminal section; belongs to the FPP/GGPP synthase family. Hexamer.

The catalysed reaction is geranylgeranyl diphosphate = fusicocca-2,10(14)-diene + diphosphate. It catalyses the reaction isopentenyl diphosphate + (2E,6E)-farnesyl diphosphate = (2E,6E,10E)-geranylgeranyl diphosphate + diphosphate. It functions in the pathway mycotoxin biosynthesis. In terms of biological role, multifunctional diterpene synthase; part of the 2 gene clusters that mediate the biosynthesis of fusicoccins, diterpene glucosides that display phytohormone-like activity and function as potent activators of plasma membrane H(+)-ATPases in plants by modifying 14-3-3 proteins and cause the plant disease constriction canker. The first step in the pathway is performed by the fusicoccadiene synthase PaFS that possesses both prenyl transferase and terpene cyclase activity, converting isopentenyl diphosphate and dimethylallyl diphosphate into geranylgeranyl diphosphate (GGDP) and successively converting GGDP into fusicocca-2,10(14)-diene, a precursor for fusicoccin H. Fusicoccadiene synthase is an allosteric enzyme for GGPP cyclization that generates 64% fusicoccadiene, 9% delta-araneosene, and one additional unidentified diterpene product, when incubated with GGPP. In the absence of isopentenyl diphosphate (IPP), PaFS can also solvolyze the shorter chain geranyl diphosphate (GPP) and farnesyl diphosphate (FPP) as alternative substrates to yield predominantly acyclic products. FPP is converted to farnesol (60.5%), nerolidol (14.0%), and farnesene (14.0%), while GPP is converted to a mixture of geraniol (59.5%) and linalool (35.0%). The second step is the oxidation at the C-8 position by the cytochrome P450 monooxygenase PaP450-2 to yield fusicocca-2,10(14)-diene-8-beta-ol. The cytochrome P450 monooxygenase PaP450-1 then catalyzes the hydroxylation at the C-16 position to produce fusicocca-2,10(14)-diene-8-beta,16-diol. The dioxygenase fc-dox then catalyzes the 16-oxydation of fusicocca-2,10(14)-diene-8-beta,16-diol to yield an aldehyde (8-beta-hydroxyfusicocca-1,10(14)-dien-16-al). The short-chain dehydrogenase/reductase fc-sdr catalyzes the reduction of the aldehyde to yield fusicocca-1,10(14)-diene-8-beta,16-diol. The next step is the hydroxylation at C-9 performed by the cytochrome P450 monooxygenase PaP450-3 that leads to fusicoccin H aglycon which is glycosylated to fusicoccin H by the O-glycosyltransferase PAGT. Hydroxylation at C-12 by the cytochrome P450 monooxygenase PaP450-4 leads then to the production of fusicoccin Q and is followed by methylation by the O-methyltransferase PAMT to yield fusicoccin P. Fusicoccin P is further converted to fusicoccin J via prenylation by the O-glucose prenyltransferase PaPT. Cytochrome P450 monooxygenase PaP450-5 then performs hydroxylation at C-19 to yield dideacetyl-fusicoccin A which is acetylated to 3'-O-deacetyl-fusicoccin A by the O-acetyltransferase PaAT-2. Finally, a another acetylation by the O-acetyltransferase PaAT-1 yields fusicoccin A. In Phomopsis amygdali (Fusicoccum amygdali), this protein is Fusicoccadiene synthase.